We begin with the raw amino-acid sequence, 258 residues long: Regulatory protein RecX (258 aa).

Belongs to the RecX family.

It is found in the cytoplasm. Modulates RecA activity. This chain is Regulatory protein RecX, found in Streptococcus gordonii (strain Challis / ATCC 35105 / BCRC 15272 / CH1 / DL1 / V288).